We begin with the raw amino-acid sequence, 440 residues long: Thymidine phosphorylase (440 aa).

Belongs to the thymidine/pyrimidine-nucleoside phosphorylase family. Homodimer.

It catalyses the reaction thymidine + phosphate = 2-deoxy-alpha-D-ribose 1-phosphate + thymine. The protein operates within pyrimidine metabolism; dTMP biosynthesis via salvage pathway; dTMP from thymine: step 1/2. In terms of biological role, the enzymes which catalyze the reversible phosphorolysis of pyrimidine nucleosides are involved in the degradation of these compounds and in their utilization as carbon and energy sources, or in the rescue of pyrimidine bases for nucleotide synthesis. This chain is Thymidine phosphorylase, found in Yersinia enterocolitica serotype O:8 / biotype 1B (strain NCTC 13174 / 8081).